A 418-amino-acid polypeptide reads, in one-letter code: Putative F-box protein At1g20795 (418 aa).

One can recognise an F-box domain in the interval 1–46; the sequence is METLGLPLPLFEKILFRLDPISLVMMKCTRRSFNSHISEDPYFKSK.

This chain is Putative F-box protein At1g20795, found in Arabidopsis thaliana (Mouse-ear cress).